The sequence spans 130 residues: Large ribosomal subunit protein bL19 (130 aa).

This sequence belongs to the bacterial ribosomal protein bL19 family.

Functionally, this protein is located at the 30S-50S ribosomal subunit interface and may play a role in the structure and function of the aminoacyl-tRNA binding site. In Mycoplasma capricolum subsp. capricolum (strain California kid / ATCC 27343 / NCTC 10154), this protein is Large ribosomal subunit protein bL19.